The primary structure comprises 358 residues: Alanine racemase, biosynthetic (358 aa).

Lys-34 functions as the Proton acceptor; specific for D-alanine in the catalytic mechanism. Lys-34 is modified (N6-(pyridoxal phosphate)lysine). A substrate-binding site is contributed by Arg-130. Catalysis depends on Tyr-254, which acts as the Proton acceptor; specific for L-alanine. Residue Met-302 coordinates substrate.

The protein belongs to the alanine racemase family. It depends on pyridoxal 5'-phosphate as a cofactor.

The enzyme catalyses L-alanine = D-alanine. Its pathway is amino-acid biosynthesis; D-alanine biosynthesis; D-alanine from L-alanine: step 1/1. The protein operates within cell wall biogenesis; peptidoglycan biosynthesis. Functionally, catalyzes the interconversion of L-alanine and D-alanine. Provides the D-alanine required for cell wall biosynthesis. This is Alanine racemase, biosynthetic (alr) from Pseudomonas aeruginosa (strain ATCC 15692 / DSM 22644 / CIP 104116 / JCM 14847 / LMG 12228 / 1C / PRS 101 / PAO1).